The sequence spans 402 residues: La-related protein 7 homolog (402 aa).

The segment at 64–138 (EPLNPDFLSA…FDNSSHMVIR (75 aa)) is HTH La-type RNA-binding-like region. The RRM-like region stretch occupies residues 148 to 230 (IPLYDRIIYV…LTRKEWTNRE (83 aa)). The tract at residues 288–400 (DFTKNLLTRI…EEEKNYWRML (113 aa)) is xRRM-like region. In terms of domain architecture, xRRM spans 288-402 (DFTKNLLTRI…EKNYWRMLKK (115 aa)).

The protein belongs to the LARP7 family. As to quaternary structure, component of the telomerase holoenzyme complex composed minimally of trt1 and the telomerase RNA template component. Interacts with skp1.

The protein localises to the chromosome. It is found in the telomere. Its subcellular location is the nucleus. It localises to the cytoplasm. In terms of biological role, RNA-binding protein required for assembly of the holoenzyme telomerase ribonucleoprotein (RNP) complex. Specifically binds telomerase RNA ter1 and promotes assembly of ter1 with catalytic subunit trt1. Telomerase is a ribonucleoprotein enzyme essential that copies new telomeric repeats onto chromosome ends and functions to maintain cell division. In Schizosaccharomyces pombe (strain 972 / ATCC 24843) (Fission yeast), this protein is La-related protein 7 homolog.